An 88-amino-acid polypeptide reads, in one-letter code: U-scoloptoxin(12)-Sa1a (88 aa).

Positions 1–20 are cleaved as a signal peptide; the sequence is MKYMIITVVILFTCALKMFC.

The protein belongs to the scoloptoxin-12 family. Contains 3 disulfide bonds. In terms of tissue distribution, expressed by the venom gland.

The protein resides in the secreted. In Scolopendra alternans (Florida Keys giant centipede), this protein is U-scoloptoxin(12)-Sa1a.